The chain runs to 316 residues: 4-hydroxy-3-methylbut-2-enyl diphosphate reductase (316 aa).

Cysteine 12 contacts [4Fe-4S] cluster. Positions 41 and 74 each coordinate (2E)-4-hydroxy-3-methylbut-2-enyl diphosphate. Dimethylallyl diphosphate is bound by residues histidine 41 and histidine 74. 2 residues coordinate isopentenyl diphosphate: histidine 41 and histidine 74. Residue cysteine 96 coordinates [4Fe-4S] cluster. Histidine 124 provides a ligand contact to (2E)-4-hydroxy-3-methylbut-2-enyl diphosphate. Histidine 124 provides a ligand contact to dimethylallyl diphosphate. Histidine 124 provides a ligand contact to isopentenyl diphosphate. Glutamate 126 functions as the Proton donor in the catalytic mechanism. Threonine 167 serves as a coordination point for (2E)-4-hydroxy-3-methylbut-2-enyl diphosphate. A [4Fe-4S] cluster-binding site is contributed by cysteine 197. Residues serine 225, serine 226, asparagine 227, and serine 269 each coordinate (2E)-4-hydroxy-3-methylbut-2-enyl diphosphate. Dimethylallyl diphosphate is bound by residues serine 225, serine 226, asparagine 227, and serine 269. Positions 225, 226, 227, and 269 each coordinate isopentenyl diphosphate.

It belongs to the IspH family. As to quaternary structure, homodimer. [4Fe-4S] cluster serves as cofactor.

The enzyme catalyses isopentenyl diphosphate + 2 oxidized [2Fe-2S]-[ferredoxin] + H2O = (2E)-4-hydroxy-3-methylbut-2-enyl diphosphate + 2 reduced [2Fe-2S]-[ferredoxin] + 2 H(+). It catalyses the reaction dimethylallyl diphosphate + 2 oxidized [2Fe-2S]-[ferredoxin] + H2O = (2E)-4-hydroxy-3-methylbut-2-enyl diphosphate + 2 reduced [2Fe-2S]-[ferredoxin] + 2 H(+). It functions in the pathway isoprenoid biosynthesis; dimethylallyl diphosphate biosynthesis; dimethylallyl diphosphate from (2E)-4-hydroxy-3-methylbutenyl diphosphate: step 1/1. Its pathway is isoprenoid biosynthesis; isopentenyl diphosphate biosynthesis via DXP pathway; isopentenyl diphosphate from 1-deoxy-D-xylulose 5-phosphate: step 6/6. Functionally, catalyzes the conversion of 1-hydroxy-2-methyl-2-(E)-butenyl 4-diphosphate (HMBPP) into a mixture of isopentenyl diphosphate (IPP) and dimethylallyl diphosphate (DMAPP). Acts in the terminal step of the DOXP/MEP pathway for isoprenoid precursor biosynthesis. This Escherichia coli O6:H1 (strain CFT073 / ATCC 700928 / UPEC) protein is 4-hydroxy-3-methylbut-2-enyl diphosphate reductase.